The sequence spans 342 residues: Fatty acid desaturase 6 (342 aa).

The next 2 helical transmembrane spans lie at 39 to 59 and 63 to 83; these read GVDCAILALSLLALPPGFLCL and SPLVFALGITILGVCHYTLTV. A Histidine box-1 motif is present at residues 87–91; it reads HLATH. The short motif at 124 to 128 is the Histidine box-2 element; the sequence is HVKMH. The next 2 membrane-spanning stretches (helical) occupy residues 151–171 and 185–205; these read YVYMFLAPLLIPIITPLVAVE and LGLISLGLYSQYWLLLNVSGF. The Histidine box-3 motif lies at 277–281; sequence HVEHH.

This sequence belongs to the fatty acid desaturase type 1 family.

Its subcellular location is the membrane. Its pathway is lipid metabolism; fatty acid metabolism. In Bos taurus (Bovine), this protein is Fatty acid desaturase 6 (FADS6).